A 205-amino-acid chain; its full sequence is ATP phosphoribosyltransferase (205 aa).

This sequence belongs to the ATP phosphoribosyltransferase family. Short subfamily. As to quaternary structure, heteromultimer composed of HisG and HisZ subunits.

It localises to the cytoplasm. The catalysed reaction is 1-(5-phospho-beta-D-ribosyl)-ATP + diphosphate = 5-phospho-alpha-D-ribose 1-diphosphate + ATP. It participates in amino-acid biosynthesis; L-histidine biosynthesis; L-histidine from 5-phospho-alpha-D-ribose 1-diphosphate: step 1/9. Its function is as follows. Catalyzes the condensation of ATP and 5-phosphoribose 1-diphosphate to form N'-(5'-phosphoribosyl)-ATP (PR-ATP). Has a crucial role in the pathway because the rate of histidine biosynthesis seems to be controlled primarily by regulation of HisG enzymatic activity. The polypeptide is ATP phosphoribosyltransferase (Leptospira borgpetersenii serovar Hardjo-bovis (strain JB197)).